Here is a 184-residue protein sequence, read N- to C-terminus: RFKKIRRLGALPGLTSKRPRSGNDLKNQLRSVKRSQYRIRLEEKQKLRFHYGLTERQLLKYVHIAGKVKGSTGQVLLQLLEMRLDNILFRLGMASTIPGARQLVNHRHILVNGRIVDIPSYRCKPQDIITTKDKQRSKALIQNYIASSTQPQEELPNHLTIDAFQYKGLVNQIIDSKWIGLKIN.

Residues Met82–Asn143 form the S4 RNA-binding domain.

This sequence belongs to the universal ribosomal protein uS4 family. As to quaternary structure, part of the 30S ribosomal subunit. Contacts protein S5. The interaction surface between S4 and S5 is involved in control of translational fidelity.

It is found in the plastid. Its subcellular location is the chloroplast. Functionally, one of the primary rRNA binding proteins, it binds directly to 16S rRNA where it nucleates assembly of the body of the 30S subunit. In terms of biological role, with S5 and S12 plays an important role in translational accuracy. The polypeptide is Small ribosomal subunit protein uS4c (rps4) (Patersonia fragilis (Short purple-flag)).